We begin with the raw amino-acid sequence, 132 residues long: MAQHDYRELAAVFAGGALGSLARAALSALAAGDPASWPWPTFTVNIVGAFLVGYFTTRLLERLPTSSYRRPLLGTGFCGGLTTFSTMQVETLTMLEHHHWGLAAGYTLTSIAAGLLAVHLATKLVRRVRVRR.

4 helical membrane-spanning segments follow: residues 9–29 (LAAV…LSAL), 35–55 (ASWP…VGYF), 72–89 (LLGT…TMQV), and 100–120 (WGLA…AVHL). Residues Gly79 and Thr82 each coordinate Na(+).

The protein belongs to the fluoride channel Fluc/FEX (TC 1.A.43) family.

It is found in the cell membrane. It carries out the reaction fluoride(in) = fluoride(out). With respect to regulation, na(+) is not transported, but it plays an essential structural role and its presence is essential for fluoride channel function. Fluoride-specific ion channel. Important for reducing fluoride concentration in the cell, thus reducing its toxicity. The chain is Fluoride-specific ion channel FluC 1 from Mycolicibacterium paratuberculosis (strain ATCC BAA-968 / K-10) (Mycobacterium paratuberculosis).